The primary structure comprises 2417 residues: Protein pad-1 (2417 aa).

4 disordered regions span residues 409 to 437 (SSNS…DREG), 449 to 475 (SNKD…PDEE), 994 to 1029 (TSTG…DDDT), and 1957 to 2032 (SMSN…RRDP). Low complexity-rich tracts occupy residues 456–468 (TSVT…NASS) and 1002–1024 (DPSA…VVPA). Residues 1969-1982 (DNPSGSTRNSTLSL) are compositionally biased toward polar residues. Over residues 2003–2014 (SKSENMKIEKKS) the composition is skewed to basic and acidic residues. Polar residues predominate over residues 2015–2025 (SSNLRASIKDT).

The protein belongs to the DOP1 family.

Its function is as follows. May be involved in protein traffic between late Golgi and early endosomes. Essential for cell patterning during gastrulation. This chain is Protein pad-1 (pad-1), found in Caenorhabditis elegans.